A 251-amino-acid polypeptide reads, in one-letter code: Imidazole glycerol phosphate synthase subunit HisF (251 aa).

Catalysis depends on residues Asp11 and Asp130.

It belongs to the HisA/HisF family. Heterodimer of HisH and HisF.

It is found in the cytoplasm. It catalyses the reaction 5-[(5-phospho-1-deoxy-D-ribulos-1-ylimino)methylamino]-1-(5-phospho-beta-D-ribosyl)imidazole-4-carboxamide + L-glutamine = D-erythro-1-(imidazol-4-yl)glycerol 3-phosphate + 5-amino-1-(5-phospho-beta-D-ribosyl)imidazole-4-carboxamide + L-glutamate + H(+). Its pathway is amino-acid biosynthesis; L-histidine biosynthesis; L-histidine from 5-phospho-alpha-D-ribose 1-diphosphate: step 5/9. In terms of biological role, IGPS catalyzes the conversion of PRFAR and glutamine to IGP, AICAR and glutamate. The HisF subunit catalyzes the cyclization activity that produces IGP and AICAR from PRFAR using the ammonia provided by the HisH subunit. This Chloroherpeton thalassium (strain ATCC 35110 / GB-78) protein is Imidazole glycerol phosphate synthase subunit HisF.